Reading from the N-terminus, the 607-residue chain is MSIRLLPPTLVNQIAAGEVVERPASAVKELVENAIDAGASRIDVVLAEGGQSLIAVSDDGCGMSPDEMMLAVERHATSKLPDDDLVRIRFLGFRGEALPSIGSVARLTLTSRPRGADSAWSLSVEGGAKGRPVPAAHPQGTRIEVRDLFYATPARLKFLKAARTELTHAADVIERLGMAHPDIAFSLSDGGRKVLDLAAKRGEPGAALLSRIAQVVGREFEPNALALDAERDGVRLTGWAGLPTYNRATSAAQYLFVNGRPVKDRLVIGAVRGAYQDVLARDRHPVVALFLELDPDQVDVNVHPAKAEVRFRDSGLVRGLIVGAIRHALAGAGHRASSTLTGVALGALGGGGGNSPPPSFAHYPPPRPSLPLIRAGIGAQAPLGLAEQGLGLHLPPAAPVAPPEAREGPGEASVDYPLGAAKAQLHDTYIVAETADGLVIVDQHAAHERLVFERLKLGLTEGQVARQGLLLPEVVDLGDAGAARVTERAGDLARLGLVIDSFGPGAVVVREVPALLGDDDVQGLVRDLADELAEWGASTVLEERLLHICATMACHGSVRAGRRLSVPEMNALLRRMEATPLSGQCNHGRPTHVSLSLNDIEKLFGRR.

It belongs to the DNA mismatch repair MutL/HexB family.

Functionally, this protein is involved in the repair of mismatches in DNA. It is required for dam-dependent methyl-directed DNA mismatch repair. May act as a 'molecular matchmaker', a protein that promotes the formation of a stable complex between two or more DNA-binding proteins in an ATP-dependent manner without itself being part of a final effector complex. The polypeptide is DNA mismatch repair protein MutL (Paramagnetospirillum magneticum (strain ATCC 700264 / AMB-1) (Magnetospirillum magneticum)).